Here is a 787-residue protein sequence, read N- to C-terminus: Endonuclease MutS2 (787 aa).

Position 334–341 (334–341 (GPNTGGKT)) interacts with ATP. Residues 685-709 (KAQDPAKSAKQPRASVKRSGSSGMS) form a disordered region. One can recognise a Smr domain in the interval 712–787 (LDLRGHRYEE…GDGSTVVHFK (76 aa)).

Belongs to the DNA mismatch repair MutS family. MutS2 subfamily. In terms of assembly, homodimer. Binds to stalled ribosomes, contacting rRNA.

Endonuclease that is involved in the suppression of homologous recombination and thus may have a key role in the control of bacterial genetic diversity. Its function is as follows. Acts as a ribosome collision sensor, splitting the ribosome into its 2 subunits. Detects stalled/collided 70S ribosomes which it binds and splits by an ATP-hydrolysis driven conformational change. Acts upstream of the ribosome quality control system (RQC), a ribosome-associated complex that mediates the extraction of incompletely synthesized nascent chains from stalled ribosomes and their subsequent degradation. Probably generates substrates for RQC. The protein is Endonuclease MutS2 of Levilactobacillus brevis (strain ATCC 367 / BCRC 12310 / CIP 105137 / JCM 1170 / LMG 11437 / NCIMB 947 / NCTC 947) (Lactobacillus brevis).